A 352-amino-acid polypeptide reads, in one-letter code: Delta(7)-sterol 5(6)-desaturas erg3A (352 aa).

A glycan (N-linked (GlcNAc...) asparagine) is linked at asparagine 39. A run of 3 helical transmembrane segments spans residues 82-102, 128-147, and 167-187; these read FLSF…ISAT, IAQT…PFLV, and YYSI…IYWI. The Fatty acid hydroxylase domain maps to 174 to 299; the sequence is PLFIAFTDFC…FTTLWDRLGG (126 aa). The short motif at 188-192 is the Histidine box-1 element; it reads HRGLH. The short motif at 201-205 is the Histidine box-2 element; it reads HKPHH. Residues 231–251 traverse the membrane as a helical segment; that stretch reads HVFPFIFPLQKLAYVFLFGFI. Positions 276-280 match the Histidine box-3 motif; that stretch reads HTMHH.

The protein belongs to the sterol desaturase family. Requires Fe cation as cofactor.

It is found in the endoplasmic reticulum membrane. Its function is as follows. Delta(7)-sterol 5(6)-desaturase; part of the third module of ergosterol biosynthesis pathway that includes the late steps of the pathway. Erg3A is a minor delta(7)-sterol 5(6)-desaturase within the ergosterol pathway, erg3B being the major one. The third module or late pathway involves the ergosterol synthesis itself through consecutive reactions that mainly occur in the endoplasmic reticulum (ER) membrane. Firstly, the squalene synthase erg9 catalyzes the condensation of 2 farnesyl pyrophosphate moieties to form squalene, which is the precursor of all steroids. Squalene synthase is crucial for balancing the incorporation of farnesyl diphosphate (FPP) into sterol and nonsterol isoprene synthesis. Secondly, squalene is converted into lanosterol by the consecutive action of the squalene epoxidase erg1 and the lanosterol synthase erg7. Then, the delta(24)-sterol C-methyltransferase erg6 methylates lanosterol at C-24 to produce eburicol. Eburicol is the substrate of the sterol 14-alpha demethylase encoded by cyp51A and cyp51B, to yield 4,4,24-trimethyl ergosta-8,14,24(28)-trienol. The C-14 reductase erg24 then reduces the C14=C15 double bond which leads to 4,4-dimethylfecosterol. A sequence of further demethylations at C-4, involving the C-4 demethylation complex containing the C-4 methylsterol oxidases erg25A or erg25B, the sterol-4-alpha-carboxylate 3-dehydrogenase erg26 and the 3-keto-steroid reductase erg27, leads to the production of fecosterol via 4-methylfecosterol. The C-8 sterol isomerase erg2 then catalyzes the reaction which results in unsaturation at C-7 in the B ring of sterols and thus converts fecosterol to episterol. The sterol-C5-desaturase erg3B then catalyzes the introduction of a C-5 double bond in the B ring to produce 5-dehydroepisterol. The 2 other sterol-C5-desaturases, erg3A and erg3C, seem to be less important in ergosterol biosynthesis. The C-22 sterol desaturase erg5 further converts 5-dehydroepisterol into ergosta-5,7,22,24(28)-tetraen-3beta-ol by forming the C-22(23) double bond in the sterol side chain. Finally, ergosta-5,7,22,24(28)-tetraen-3beta-ol is substrate of the C-24(28) sterol reductases erg4A and erg4B to produce ergosterol. Possible alternative sterol biosynthetic pathways might exist from fecosterol to ergosterol, depending on the activities of the erg3 isoforms. This is Delta(7)-sterol 5(6)-desaturas erg3A from Aspergillus fumigatus (strain ATCC MYA-4609 / CBS 101355 / FGSC A1100 / Af293) (Neosartorya fumigata).